A 66-amino-acid chain; its full sequence is Large ribosomal subunit protein bL35 (66 aa).

The tract at residues 1–42 is disordered; it reads MPKQKTHRASAKRFKRTANGGLKRHHAYTGHRFHGKTKKQRR.

It belongs to the bacterial ribosomal protein bL35 family.

The chain is Large ribosomal subunit protein bL35 from Lactobacillus gasseri (strain ATCC 33323 / DSM 20243 / BCRC 14619 / CIP 102991 / JCM 1131 / KCTC 3163 / NCIMB 11718 / NCTC 13722 / AM63).